Reading from the N-terminus, the 457-residue chain is MSFVNVAPQLVSTAAADAARIGSAINTANTAAAATTQVLAAAHDEVSTAIAALFGSHGQHYQAISAQVAAYQERFVLALSQASSTYAVAEAASATPLQNVLDAINAPVQSLTGRPLIGDGANGIDGTGQAGGNGGWLWGNGGNGGSGAPGQAGGAGGAAGLIGNGGAGGAGGQGLPFEAGANGGAGGAGGWLFGNGGAGGVGGAGGAGTTFGVAGGDGGTGGVGGHGGLIGVGGHGGDGGTGGTGGAVSLARAGTAGGAGGGPAGGIGGAGGVGGAGGAAGAVTTITHASFNDPHGVAVNPGGNIYVTNQGSNTVSVIDPVTNTVTGSITDGNGPSGVAVSPVTGLVFVTNFDSNTVSVIDPNTNTVTGSIPVGTGAYGVAVNPGGNIYVTNQFSNTVSVIDPATNTVTGSPIPVGLDPTGVAVNPVTGVVYVTNSLDDTVSVITGEPARSVCSAAI.

One can recognise a PE domain in the interval 1-92 (MSFVNVAPQL…SSTYAVAEAA (92 aa)). NHL repeat units lie at residues 291–321 (FNDP…IDPV), 333–363 (NGPS…IDPN), 379–404 (GVAV…IDPA), and 419–447 (PTGV…ITGE).

Belongs to the mycobacterial PE family. PGRS subfamily.

It is found in the secreted. Its subcellular location is the cell wall. Its function is as follows. Enhances mycobacterial intracellular survival, probably via altering host macrophage cytokine profiling and attenuating the cell apoptosis. Could be required for host endothelial-cell invasion. Expression in Mycobacterium smegmatis, a nonpathogenic species naturally deficient in PE_PGRS genes, results in alteration of the production of host cytokines, including IL-6, IL-1beta, IL-10 and IL-12p40, as well as enhanced survival within macrophages largely via attenuating the apoptosis of macrophages. The chain is PE-PGRS family protein PE_PGRS18 from Mycobacterium tuberculosis (strain ATCC 25618 / H37Rv).